We begin with the raw amino-acid sequence, 526 residues long: Thymocyte selection-associated high mobility group box protein TOX (526 aa).

2 disordered regions span residues 138-178 (MPDI…PHGQ) and 192-264 (GLNM…PQKP). Residues 192–203 (GLNMGGSNVPHN) are compositionally biased toward polar residues. Over residues 209–220 (GSKSATPSPSSS) the composition is skewed to low complexity. Residues 228–245 (DTSKINGGEKRPASDMGK) show a composition bias toward basic and acidic residues. The Nuclear localization signal motif lies at 237 to 256 (KRPASDMGKKPKTPKKKKKK). The segment covering 246–256 (KPKTPKKKKKK) has biased composition (basic residues). Positions 261–329 (PQKPVSAYAL…EYLKQLAAYR (69 aa)) form a DNA-binding region, HMG box.

The protein belongs to the high motility group (HMG) box superfamily. Interacts with HBO1 complex composed at least of KAT7/HBO1, ING4, MEAF6, and JADE2; this complex is involved in histone acetylation. Interacts with DNMT1, LEO1, PAF1, SAP130 and SIN3A; these interactors regulate chromatin remodeling. Interacts with an array of proteins involved in RNA processing and translation and DNA replication. As to expression, expressed in NK cells. Highly expressed in tumor-infiltrating CD8-positive T cells (at protein level).

The protein resides in the nucleus. Its function is as follows. Transcriptional regulator with a major role in neural stem cell commitment and corticogenesis as well as in lymphoid cell development and lymphoid tissue organogenesis. Binds to GC-rich DNA sequences in the proximity of transcription start sites and may alter chromatin structure, modifying access of transcription factors to DNA. During cortical development, controls the neural stem cell pool by inhibiting the switch from proliferative to differentiating progenitors. Beyond progenitor cells, promotes neurite outgrowth in newborn neurons migrating to reach the cortical plate. May activate or repress critical genes for neural stem cell fate such as SOX2, EOMES and ROBO2. Plays an essential role in the development of lymphoid tissue-inducer (LTi) cells, a subset necessary for the formation of secondary lymphoid organs: peripheral lymph nodes and Peyer's patches. Acts as a developmental checkpoint and regulates thymocyte positive selection toward T cell lineage commitment. Required for the development of various T cell subsets, including CD4-positive helper T cells, CD8-positive cytotoxic T cells, regulatory T cells and CD1D-dependent natural killer T (NKT) cells. Required for the differentiation of common lymphoid progenitors (CMP) to innate lymphoid cells (ILC). May regulate the NOTCH-mediated gene program, promoting differentiation of the ILC lineage. Required at the progenitor phase of NK cell development in the bone marrow to specify NK cell lineage commitment. Upon chronic antigen stimulation, diverts T cell development by promoting the generation of exhaustive T cells, while suppressing effector and memory T cell programming. May regulate the expression of genes encoding inhibitory receptors such as PDCD1 and induce the exhaustion program, to prevent the overstimulation of T cells and activation-induced cell death. The protein is Thymocyte selection-associated high mobility group box protein TOX of Homo sapiens (Human).